Consider the following 365-residue polypeptide: Flagellar P-ring protein (365 aa).

Residues 1–19 (MIKFLSTFMLLLVTTVVQA) form the signal peptide.

This sequence belongs to the FlgI family. In terms of assembly, the basal body constitutes a major portion of the flagellar organelle and consists of four rings (L,P,S, and M) mounted on a central rod.

It is found in the periplasm. The protein localises to the bacterial flagellum basal body. Functionally, assembles around the rod to form the L-ring and probably protects the motor/basal body from shearing forces during rotation. In Escherichia fergusonii (strain ATCC 35469 / DSM 13698 / CCUG 18766 / IAM 14443 / JCM 21226 / LMG 7866 / NBRC 102419 / NCTC 12128 / CDC 0568-73), this protein is Flagellar P-ring protein.